The chain runs to 387 residues: Putative gustatory receptor 22d (387 aa).

Residues 1–43 lie on the Cytoplasmic side of the membrane; that stretch reads MFRPRCGLRQKFVYVILKSILYSSWLLGIFPFKYEPKKRRLRR. A helical transmembrane segment spans residues 44–64; it reads SMWLILFGVVISSSLLILMVK. Topologically, residues 65-82 are extracellular; the sequence is QSAEDREHGIMLDVFQRN. Residues 83–103 traverse the membrane as a helical segment; it reads ALLYQISSLMGVVGVVSICTV. Residues 104 to 142 are Cytoplasmic-facing; that stretch reads HLRTLWRSKHLEEIYNGLMLLEAKYFCSNAVECPAFDGY. Residues 143-163 traverse the membrane as a helical segment; it reads VIQKGVVIVVGLLAPWMVHFG. The Extracellular segment spans residues 164-184; that stretch reads MPDSKLPVLNVLVVSMVKLGT. A helical membrane pass occupies residues 185–205; that stretch reads LLLALHYHLGVVIIYRFVWLI. The Cytoplasmic portion of the chain corresponds to 206–252; sequence NRELLSLVCSLRGNHKGSSSRVRFLLKLYNKLVNLYSKLADCYDCQT. Residues 253–273 form a helical membrane-spanning segment; sequence VLMMAIFLAANIIVCFYMIVY. At 274–281 the chain is on the extracellular side; it reads RISLSKMS. Residues 282–302 traverse the membrane as a helical segment; that stretch reads FFVMLIMFPLAIANNFMDFWL. The Cytoplasmic portion of the chain corresponds to 303-363; the sequence is SMKVCDLLQK…HCGLFHVNRE (61 aa). Residues 364-384 form a helical membrane-spanning segment; that stretch reads MGFKMFVASVLYLLYLVQFDY. At 385–387 the chain is on the extracellular side; the sequence is MNL.

Belongs to the insect chemoreceptor superfamily. Gustatory receptor (GR) family. Gr22e subfamily. In terms of tissue distribution, expressed in neurons of the dorsal pharyngeal sense organs of larvae.

It localises to the cell membrane. In terms of biological role, probable gustatory receptor which mediates acceptance or avoidance behavior, depending on its substrates. This chain is Putative gustatory receptor 22d, found in Drosophila melanogaster (Fruit fly).